The sequence spans 128 residues: Head peptide (128 aa).

Residues 1–22 (MWKFASIVVLVVCLAWAVYCED) form the signal peptide. Gln-23 carries the pyrrolidone carboxylic acid modification. A Hydroxyproline; partial modification is found at Pro-26. The disordered stretch occupies residues 27–128 (SLKTRFGRSA…GRANKKRAAN (102 aa)). Phe-32 is subject to Phenylalanine amide. Residues 35-55 (SADEPESDNYVSNDIMEKRSA) constitute a propeptide that is removed on maturation. Gln-56 carries the post-translational modification Pyrrolidone carboxylic acid. The residue at position 59 (Pro-59) is a Hydroxyproline; partial. A Phenylalanine amide modification is found at Phe-65. The span at 66–78 (GRSEGAEVMEKRS) shows a compositional bias: basic and acidic residues. A propeptide spanning residues 68–79 (SEGAEVMEKRSA) is cleaved from the precursor. Pyrrolidone carboxylic acid is present on Gln-80. At Pro-83 the chain carries Hydroxyproline; partial. Phenylalanine amide is present on Phe-89. Positions 92–128 (SVANPESDGYMRKRSAESEPFVTRIRHGRANKKRAAN) are excised as a propeptide. The span at 115–128 (RIRHGRANKKRAAN) shows a compositional bias: basic residues.

This sequence belongs to the NPY family. In terms of tissue distribution, expressed in the brain, terminal ganglion, and midgut of adults: numerous neurosecretory cells and midgut endocrine cells. Expression is dynamic depending on reproductive cycle.

It localises to the secreted. Its function is as follows. Has a role in inhibiting host-seeking behavior during a reproductive cycle. The sequence is that of Head peptide from Aedes aegypti (Yellowfever mosquito).